A 308-amino-acid polypeptide reads, in one-letter code: Porphobilinogen deaminase (308 aa).

The residue at position 241 (C241) is an S-(dipyrrolylmethanemethyl)cysteine.

This sequence belongs to the HMBS family. In terms of assembly, monomer. Dipyrromethane is required as a cofactor.

It catalyses the reaction 4 porphobilinogen + H2O = hydroxymethylbilane + 4 NH4(+). The protein operates within porphyrin-containing compound metabolism; protoporphyrin-IX biosynthesis; coproporphyrinogen-III from 5-aminolevulinate: step 2/4. In terms of biological role, tetrapolymerization of the monopyrrole PBG into the hydroxymethylbilane pre-uroporphyrinogen in several discrete steps. The polypeptide is Porphobilinogen deaminase (Staphylococcus aureus (strain MRSA252)).